Reading from the N-terminus, the 572-residue chain is Glutamate--tRNA ligase (572 aa).

The short motif at 112 to 122 (PNPNGPPSLGN) is the 'HIGH' region element.

This sequence belongs to the class-I aminoacyl-tRNA synthetase family. Glutamate--tRNA ligase type 2 subfamily.

It is found in the cytoplasm. It catalyses the reaction tRNA(Glu) + L-glutamate + ATP = L-glutamyl-tRNA(Glu) + AMP + diphosphate. Catalyzes the attachment of glutamate to tRNA(Glu) in a two-step reaction: glutamate is first activated by ATP to form Glu-AMP and then transferred to the acceptor end of tRNA(Glu). The chain is Glutamate--tRNA ligase from Methanocella arvoryzae (strain DSM 22066 / NBRC 105507 / MRE50).